The primary structure comprises 284 residues: Nucleoid occlusion protein (284 aa).

Positions 143-162 (EALAQRVGKSQSAIANKMRL) form a DNA-binding region, H-T-H motif.

The protein belongs to the ParB family.

The protein localises to the cytoplasm. It is found in the nucleoid. In terms of biological role, effects nucleoid occlusion by binding relatively nonspecifically to DNA and preventing the assembly of the division machinery in the vicinity of the nucleoid, especially under conditions that disturb the cell cycle. It helps to coordinate cell division and chromosome segregation by preventing the formation of the Z ring through the nucleoid, which would cause chromosome breakage. In Listeria monocytogenes serotype 4b (strain CLIP80459), this protein is Nucleoid occlusion protein.